The primary structure comprises 277 residues: Glutamate racemase (277 aa).

Residues 13 to 14 (DS) and 45 to 46 (YG) contribute to the substrate site. Catalysis depends on C76, which acts as the Proton donor/acceptor. 77–78 (NT) serves as a coordination point for substrate. C186 serves as the catalytic Proton donor/acceptor. 187-188 (TH) provides a ligand contact to substrate.

This sequence belongs to the aspartate/glutamate racemases family.

The enzyme catalyses L-glutamate = D-glutamate. The protein operates within cell wall biogenesis; peptidoglycan biosynthesis. In terms of biological role, provides the (R)-glutamate required for cell wall biosynthesis. The protein is Glutamate racemase of Ralstonia nicotianae (strain ATCC BAA-1114 / GMI1000) (Ralstonia solanacearum).